We begin with the raw amino-acid sequence, 85 residues long: MAHKKAGGSTNNGRDSVSKRLGVKRFGGQVVLAGNILVRQRGTKFHPGTNVRKGKDDTLFATMDGRVVFSKKGKFMYQYISIEIT.

It belongs to the bacterial ribosomal protein bL27 family.

The sequence is that of Large ribosomal subunit protein bL27 from Vesicomyosocius okutanii subsp. Calyptogena okutanii (strain HA).